Here is a 541-residue protein sequence, read N- to C-terminus: Coiled-coil domain-containing protein 116 (541 aa).

Residues 79-102 (QVLDSLQTVVEQATERLAAMKTEA) adopt a coiled-coil conformation. Residues 346–397 (LPGNSDLLQPSSKASIPTNREARGEPCDSLTTAYSPKTSHRKSKGRRGSPPN) are disordered. Positions 351 to 363 (DLLQPSSKASIPT) are enriched in polar residues. Residues 383–392 (TSHRKSKGRR) show a composition bias toward basic residues. Ser-394 carries the post-translational modification Phosphoserine.

It is found in the cytoplasm. The protein localises to the cytoskeleton. The protein resides in the microtubule organizing center. Its subcellular location is the centrosome. This is Coiled-coil domain-containing protein 116 (Ccdc116) from Mus musculus (Mouse).